The chain runs to 122 residues: Large ribosomal subunit protein uL14 (122 aa).

This sequence belongs to the universal ribosomal protein uL14 family. As to quaternary structure, part of the 50S ribosomal subunit. Forms a cluster with proteins L3 and L19. In the 70S ribosome, L14 and L19 interact and together make contacts with the 16S rRNA in bridges B5 and B8.

In terms of biological role, binds to 23S rRNA. Forms part of two intersubunit bridges in the 70S ribosome. This chain is Large ribosomal subunit protein uL14, found in Herminiimonas arsenicoxydans.